The chain runs to 562 residues: NAD-dependent malic enzyme (562 aa).

The active-site Proton donor is the Tyr-101. NAD(+) is bound at residue Arg-154. The Proton acceptor role is filled by Lys-172. Residues Glu-243, Asp-244, and Asp-267 each contribute to the a divalent metal cation site. NAD(+)-binding residues include Asp-267 and Asn-415.

The protein belongs to the malic enzymes family. In terms of assembly, homotetramer. Mg(2+) is required as a cofactor. Requires Mn(2+) as cofactor.

The enzyme catalyses (S)-malate + NAD(+) = pyruvate + CO2 + NADH. It carries out the reaction oxaloacetate + H(+) = pyruvate + CO2. This Vibrio parahaemolyticus serotype O3:K6 (strain RIMD 2210633) protein is NAD-dependent malic enzyme.